The sequence spans 225 residues: Peroxiredoxin-2E-2, chloroplastic (225 aa).

The N-terminal 42 residues, 1–42 (MAAPTAAALSTLSTASVTSGKRFITSSFSLSFSSRPLATGVR), are a transit peptide targeting the chloroplast. A Thioredoxin domain is found at 63–225 (IAVGDKLPDA…SSAEEMLKAL (163 aa)). The active-site Cysteine sulfenic acid (-SOH) intermediate is C111.

This sequence belongs to the peroxiredoxin family. Prx5 subfamily. In terms of assembly, monomer.

It is found in the plastid. It localises to the chloroplast stroma. It carries out the reaction [glutaredoxin]-dithiol + a hydroperoxide = [glutaredoxin]-disulfide + an alcohol + H2O. Thiol-specific peroxidase that catalyzes the reduction of hydrogen peroxide and organic hydroperoxides to water and alcohols, respectively. Plays a role in cell protection against oxidative stress by detoxifying peroxides. May be involved in chloroplast redox homeostasis. The sequence is that of Peroxiredoxin-2E-2, chloroplastic (PRXIIE-2) from Oryza sativa subsp. japonica (Rice).